Here is a 154-residue protein sequence, read N- to C-terminus: Myoglobin (154 aa).

A Globin domain is found at 2–148; sequence GLSEAEWQLV…FRKDIAAKYK (147 aa). Serine 4 bears the Phosphoserine mark. Histidine 65 is a binding site for nitrite. Histidine 65 serves as a coordination point for O2. A Phosphothreonine modification is found at threonine 68. Histidine 94 provides a ligand contact to heme b.

It belongs to the globin family. Monomeric.

The protein resides in the cytoplasm. The protein localises to the sarcoplasm. It carries out the reaction Fe(III)-heme b-[protein] + nitric oxide + H2O = Fe(II)-heme b-[protein] + nitrite + 2 H(+). It catalyses the reaction H2O2 + AH2 = A + 2 H2O. Monomeric heme protein which primary function is to store oxygen and facilitate its diffusion within muscle tissues. Reversibly binds oxygen through a pentacoordinated heme iron and enables its timely and efficient release as needed during periods of heightened demand. Depending on the oxidative conditions of tissues and cells, and in addition to its ability to bind oxygen, it also has a nitrite reductase activity whereby it regulates the production of bioactive nitric oxide. Under stress conditions, like hypoxia and anoxia, it also protects cells against reactive oxygen species thanks to its pseudoperoxidase activity. In Mesoplodon carlhubbsi (Hubb's beaked whale), this protein is Myoglobin (MB).